A 500-amino-acid polypeptide reads, in one-letter code: V-type proton ATPase subunit B (500 aa).

This sequence belongs to the ATPase alpha/beta chains family. As to quaternary structure, V-ATPase is a heteromultimeric enzyme composed of a peripheral catalytic V1 complex (main components: subunits A, B, C, D, E, and F) attached to an integral membrane V0 proton pore complex (main component: the proteolipid protein).

Its function is as follows. Non-catalytic subunit of the peripheral V1 complex of vacuolar ATPase. V-ATPase is responsible for acidifying a variety of intracellular compartments in eukaryotic cells. The protein is V-type proton ATPase subunit B of Cyanidium caldarium (Red alga).